A 376-amino-acid polypeptide reads, in one-letter code: Copper-containing nitrite reductase (376 aa).

The tat-type signal signal peptide spans 1–33; it reads MAEQMQISRRTILAGAALAGALAPVLATTSAWG. Gln-34 carries the pyrrolidone carboxylic acid modification. 2 consecutive Plastocyanin-like domains span residues 34 to 211 and 212 to 376; these read QGAV…YDKI and YYVG…PSGT. Positions 131, 136, 171, 172, 181, 186, and 342 each coordinate Cu cation.

The protein belongs to the multicopper oxidase family. As to quaternary structure, homotrimer. Cu(2+) serves as cofactor. It depends on Cu(+) as a cofactor. FAD is required as a cofactor. In terms of processing, predicted to be exported by the Tat system. The position of the signal peptide cleavage has been experimentally proven.

The protein resides in the periplasm. It carries out the reaction nitric oxide + Fe(III)-[cytochrome c] + H2O = Fe(II)-[cytochrome c] + nitrite + 2 H(+). It functions in the pathway nitrogen metabolism; nitrate reduction (denitrification); dinitrogen from nitrate: step 2/4. This Alcaligenes faecalis protein is Copper-containing nitrite reductase (nirK).